A 288-amino-acid polypeptide reads, in one-letter code: Glucose-1-phosphate thymidylyltransferase (288 aa).

G8 serves as a coordination point for dTDP-alpha-D-glucose. The dTTP site is built by G8, G11, T12, R13, K23, Q24, Q80, G85, and D108. The dTDP-alpha-D-glucose site is built by K23, Q24, Q80, G85, D108, N109, G143, E158, K159, V169, and D222. D108 contributes to the Mg(2+) binding site. A Mg(2+)-binding site is contributed by D222.

Belongs to the glucose-1-phosphate thymidylyltransferase family. Requires Mg(2+) as cofactor.

It carries out the reaction dTTP + alpha-D-glucose 1-phosphate + H(+) = dTDP-alpha-D-glucose + diphosphate. It functions in the pathway carbohydrate biosynthesis; dTDP-L-rhamnose biosynthesis. Its function is as follows. Catalyzes the conversion of glucose-1-phosphate and dTTP to dTDP-glucose and pyrophosphate. Involved in the biosynthesis of the dTDP-L-rhamnose which is a component of the critical linker, D-N-acetylglucosamine-L-rhamnose disaccharide, which connects the galactan region of arabinogalactan to peptidoglycan via a phosphodiester linkage. The protein is Glucose-1-phosphate thymidylyltransferase (rmlA) of Mycolicibacterium smegmatis (strain ATCC 700084 / mc(2)155) (Mycobacterium smegmatis).